Reading from the N-terminus, the 384-residue chain is Secreted LysM effector Blys7 (384 aa).

Residues 1-18 (MQRHLLLGLAGLPALLSA) form the signal peptide. One can recognise a LysM 1 domain in the interval 27–71 (FATVAANGETCDSMAATWGLDTATFQSLNPKAKCPEVIGGEQYCV). The segment covering 81–106 (EPTTAPATTSTQTTTTTTTEVTSTTV) has biased composition (low complexity). The interval 81 to 112 (EPTTAPATTSTQTTTTTTTEVTSTTVPGNGIT) is disordered. A LysM 2 domain is found at 127–173 (KFYFVNKGDNCADITARYNLDLSDFLEWNPKAGNSCSGLWANAYACV). Residues 183–206 (KPKPTSTSTKPPTATGNGIPTPLP) form a disordered region. Low complexity predominate over residues 186 to 195 (PTSTSTKPPT). One can recognise a LysM 3 domain in the interval 217–263 (KFYLVKPGETCADIASRNGVSLSDFLQWNPHAGNACSGLWANAYACL).

Belongs to the secreted LysM effector family.

In terms of biological role, might have a role in sequestration of chitin oligosaccharides (breakdown products of fungal cell walls that are released during invasion and act as triggers of host immunity) to dampen host defense. This is Secreted LysM effector Blys7 from Beauveria bassiana (strain ARSEF 2860) (White muscardine disease fungus).